We begin with the raw amino-acid sequence, 150 residues long: Large ribosomal subunit protein bL9 (150 aa).

It belongs to the bacterial ribosomal protein bL9 family.

Functionally, binds to the 23S rRNA. In Janthinobacterium sp. (strain Marseille) (Minibacterium massiliensis), this protein is Large ribosomal subunit protein bL9.